A 390-amino-acid polypeptide reads, in one-letter code: Pre-mycofactocin synthase (390 aa).

Residues Met-1–Asp-383 form the FMN hydroxy acid dehydrogenase domain. Residues Ser-108, Gln-128, Thr-156, and Lys-254 each coordinate FMN. Residue His-278 is the Proton acceptor of the active site. FMN is bound by residues Asp-309 to Arg-313 and Gly-332 to Arg-333.

It belongs to the FMN-dependent alpha-hydroxy acid dehydrogenase family. FMN is required as a cofactor.

It catalyses the reaction 3-amino-5-[(4-hydroxyphenyl)methyl]-4,4-dimethyl-2-pyrrolidin-2-one + O2 + H2O = pre-mycofactocin + H2O2 + NH4(+). In terms of biological role, involved in the biosynthesis of the enzyme cofactor mycofactocin (MFT). Catalyzes the oxidative deamination of AHDP (3-amino-5-[(4-hydroxyphenyl)methyl]-4,4-dimethyl-2-pyrrolidin-2-one), forming an alpha-keto amide moiety on the resulting molecule, which is called pre-mycofactocin (PMFT). This reaction occurs via a 5-[(4-hydroxyphenyl)methyl]-3-imino-4,4-dimethylpyrrolidin-2-one intermediate, which converts to PMFT. The alpha-keto amide moiety is the redox-active center for the redox activity of mycofactocin. This Mycobacterium ulcerans (strain Agy99) protein is Pre-mycofactocin synthase.